A 1227-amino-acid polypeptide reads, in one-letter code: ATP-dependent helicase/nuclease subunit A (1227 aa).

One can recognise a UvrD-like helicase ATP-binding domain in the interval 3–477 (VKYTPDQARA…IIFAENFRSS (475 aa)). Residue 24 to 31 (ASAGSGKT) coordinates ATP. Positions 505–788 (GQLKFAAGYD…KLMTIHASKG (284 aa)) constitute a UvrD-like helicase C-terminal domain.

The protein belongs to the helicase family. AddA subfamily. Heterodimer of AddA and AddB/RexB. Mg(2+) serves as cofactor.

The enzyme catalyses Couples ATP hydrolysis with the unwinding of duplex DNA by translocating in the 3'-5' direction.. It catalyses the reaction ATP + H2O = ADP + phosphate + H(+). The heterodimer acts as both an ATP-dependent DNA helicase and an ATP-dependent, dual-direction single-stranded exonuclease. Recognizes the chi site generating a DNA molecule suitable for the initiation of homologous recombination. The AddA nuclease domain is required for chi fragment generation; this subunit has the helicase and 3' -&gt; 5' nuclease activities. This Lactobacillus delbrueckii subsp. bulgaricus (strain ATCC 11842 / DSM 20081 / BCRC 10696 / JCM 1002 / NBRC 13953 / NCIMB 11778 / NCTC 12712 / WDCM 00102 / Lb 14) protein is ATP-dependent helicase/nuclease subunit A.